A 463-amino-acid polypeptide reads, in one-letter code: L-seryl-tRNA(Sec) selenium transferase (463 aa).

Residue Lys-295 is modified to N6-(pyridoxal phosphate)lysine.

The protein belongs to the SelA family. Homodecamer; pentamer of dimers. Binds only one seryl-tRNA(Sec) per dimer. It depends on pyridoxal 5'-phosphate as a cofactor.

It localises to the cytoplasm. It catalyses the reaction L-seryl-tRNA(Sec) + selenophosphate + H(+) = L-selenocysteinyl-tRNA(Sec) + phosphate. It functions in the pathway aminoacyl-tRNA biosynthesis; selenocysteinyl-tRNA(Sec) biosynthesis; selenocysteinyl-tRNA(Sec) from L-seryl-tRNA(Sec) (bacterial route): step 1/1. Converts seryl-tRNA(Sec) to selenocysteinyl-tRNA(Sec) required for selenoprotein biosynthesis. The sequence is that of L-seryl-tRNA(Sec) selenium transferase from Edwardsiella ictaluri (strain 93-146).